The sequence spans 162 residues: SsrA-binding protein (162 aa).

Residues His137–Arg154 show a composition bias toward basic and acidic residues. Residues His137–Gly162 are disordered.

It belongs to the SmpB family.

The protein localises to the cytoplasm. In terms of biological role, required for rescue of stalled ribosomes mediated by trans-translation. Binds to transfer-messenger RNA (tmRNA), required for stable association of tmRNA with ribosomes. tmRNA and SmpB together mimic tRNA shape, replacing the anticodon stem-loop with SmpB. tmRNA is encoded by the ssrA gene; the 2 termini fold to resemble tRNA(Ala) and it encodes a 'tag peptide', a short internal open reading frame. During trans-translation Ala-aminoacylated tmRNA acts like a tRNA, entering the A-site of stalled ribosomes, displacing the stalled mRNA. The ribosome then switches to translate the ORF on the tmRNA; the nascent peptide is terminated with the 'tag peptide' encoded by the tmRNA and targeted for degradation. The ribosome is freed to recommence translation, which seems to be the essential function of trans-translation. This is SsrA-binding protein from Aeromonas salmonicida (strain A449).